We begin with the raw amino-acid sequence, 260 residues long: Transcription factor BEE 1 (260 aa).

The interval 118 to 139 (ETGSLRRGKRLKKKKEEEDEKE) is disordered. Positions 151–201 (QATDSHSLAERVRRGKINERLRCLQDMVPGCYKAMGMATMLDEIINYVQSL) constitute a bHLH domain.

It is found in the nucleus. In terms of biological role, positive regulator of brassinosteroid signaling. The sequence is that of Transcription factor BEE 1 (BEE1) from Arabidopsis thaliana (Mouse-ear cress).